A 506-amino-acid chain; its full sequence is Galactose/methyl galactoside import ATP-binding protein MglA (506 aa).

ABC transporter domains follow at residues 14–249 (LTMT…VGRE) and 260–506 (TPKE…AKYL). Residue 46 to 53 (GENGAGKS) coordinates ATP.

This sequence belongs to the ABC transporter superfamily. Galactose/methyl galactoside importer (TC 3.A.1.2.3) family. As to quaternary structure, the complex is composed of one ATP-binding protein (MglA), two transmembrane proteins (MglC) and a solute-binding protein (MglB).

The protein resides in the cell inner membrane. The enzyme catalyses D-galactose(out) + ATP + H2O = D-galactose(in) + ADP + phosphate + H(+). It carries out the reaction methyl beta-D-galactoside(out) + ATP + H2O = methyl beta-D-galactoside(in) + ADP + phosphate + H(+). Part of the ABC transporter complex MglABC involved in galactose/methyl galactoside import. Responsible for energy coupling to the transport system. This is Galactose/methyl galactoside import ATP-binding protein MglA from Pasteurella multocida (strain Pm70).